The sequence spans 283 residues: Bis(5'-nucleosyl)-tetraphosphatase, symmetrical (283 aa).

Belongs to the Ap4A hydrolase family.

It catalyses the reaction P(1),P(4)-bis(5'-adenosyl) tetraphosphate + H2O = 2 ADP + 2 H(+). Hydrolyzes diadenosine 5',5'''-P1,P4-tetraphosphate to yield ADP. The protein is Bis(5'-nucleosyl)-tetraphosphatase, symmetrical of Pseudomonas fluorescens (strain SBW25).